We begin with the raw amino-acid sequence, 488 residues long: Probable malate:quinone oxidoreductase (488 aa).

It belongs to the MQO family. FAD is required as a cofactor.

The enzyme catalyses (S)-malate + a quinone = a quinol + oxaloacetate. It functions in the pathway carbohydrate metabolism; tricarboxylic acid cycle; oxaloacetate from (S)-malate (quinone route): step 1/1. This Neisseria gonorrhoeae (strain ATCC 700825 / FA 1090) protein is Probable malate:quinone oxidoreductase.